Consider the following 154-residue polypeptide: Endoribonuclease YbeY (154 aa).

Zn(2+)-binding residues include His-120, His-124, and His-130.

The protein belongs to the endoribonuclease YbeY family. Requires Zn(2+) as cofactor.

Its subcellular location is the cytoplasm. Its function is as follows. Single strand-specific metallo-endoribonuclease involved in late-stage 70S ribosome quality control and in maturation of the 3' terminus of the 16S rRNA. This is Endoribonuclease YbeY from Oceanobacillus iheyensis (strain DSM 14371 / CIP 107618 / JCM 11309 / KCTC 3954 / HTE831).